The chain runs to 264 residues: tRNA pseudouridine synthase A (264 aa).

The active-site Nucleophile is the Asp-51. Tyr-109 contributes to the substrate binding site.

The protein belongs to the tRNA pseudouridine synthase TruA family. Homodimer.

It catalyses the reaction uridine(38/39/40) in tRNA = pseudouridine(38/39/40) in tRNA. Its function is as follows. Formation of pseudouridine at positions 38, 39 and 40 in the anticodon stem and loop of transfer RNAs. The protein is tRNA pseudouridine synthase A of Pseudoalteromonas translucida (strain TAC 125).